The sequence spans 189 residues: UPF0312 protein VIBHAR_05924 (189 aa).

The signal sequence occupies residues 1–22 (MKKSLFATGLAIAIALPFGANA).

Belongs to the UPF0312 family. Type 1 subfamily.

Its subcellular location is the periplasm. The chain is UPF0312 protein VIBHAR_05924 from Vibrio campbellii (strain ATCC BAA-1116).